We begin with the raw amino-acid sequence, 231 residues long: WAP four-disulfide core domain protein 3 (231 aa).

The signal sequence occupies residues 1–24 (MMLSCLFLLKALLALGSLESWITA). WAP domains follow at residues 26–68 (EHAK…CRDI), 69–114 (PKGR…VVPI), 119–162 (LAEF…LGDI), and 163–207 (EGGR…VPPV). Intrachain disulfides connect Cys33–Cys57, Cys40–Cys61, Cys44–Cys56, Cys50–Cys65, Cys76–Cys102, Cys85–Cys106, Cys89–Cys101, Cys95–Cys110, Cys126–Cys150, Cys133–Cys154, Cys137–Cys149, Cys143–Cys158, Cys170–Cys195, Cys178–Cys199, Cys182–Cys194, and Cys188–Cys203. A glycan (N-linked (GlcNAc...) asparagine) is linked at Asn107. Asn217 is a glycosylation site (N-linked (GlcNAc...) asparagine).

As to expression, ubiquitously expressed.

Its subcellular location is the secreted. The protein is WAP four-disulfide core domain protein 3 (WFDC3) of Homo sapiens (Human).